The sequence spans 776 residues: Photosystem I P700 chlorophyll a apoprotein A1 (776 aa).

8 helical membrane passes run 76–99, 162–185, 201–225, 309–327, 368–391, 407–433, 455–477, and 557–575; these read IFSAHFGHLAIVFIWLSGAFFHGA, LMALATGALIMAGLVLHGGIFHYH, LQHHQIGLFGLGSLGWTGHLIHVAN, VAHHHLAWAVFLMFGGHVY, WHAQLAVNLACIGSGSIVVAHHMY, LGLFTHHMWIGGLMICGAAAHAGIAVI, AIISHLNWVCMFLGFHSFGLYIH, and LMIHHIHAFTIHVTCLILL. Positions 599 and 608 each coordinate [4Fe-4S] cluster. 2 consecutive transmembrane segments (helical) span residues 615 to 636 and 690 to 712; these read HVFLGLFWMYNSLSMVIFYFSW and LSGYGLLFLGGHFVWAFSLMFLF. Histidine 701 contributes to the divinylchlorophyll a' binding site. The divinyl chlorophyll a site is built by methionine 709 and tyrosine 717. Tryptophan 718 provides a ligand contact to phylloquinone. A helical transmembrane segment spans residues 750-770; it reads AVGVTHFLFGGIVTTWAFFHA.

It belongs to the PsaA/PsaB family. As to quaternary structure, the PsaA/B heterodimer binds the P700 divinyl chlorophyll special pair and subsequent electron acceptors. PSI consists of a core antenna complex that captures photons, and an electron transfer chain that converts photonic excitation into a charge separation. The cyanobacterial PSI reaction center is composed of one copy each of PsaA,B,C,D,E,F,I,J,K,L,M and X, and forms trimeric complexes. Requires PSI electron transfer chain: 5 divinyl chlorophyll a, 1 divinyl chlorophyll a', 2 phylloquinones and 3 4Fe-4S clusters. PSI core antenna: 90 divinyl chlorophyll a, 22 carotenoids, 3 phospholipids and 1 galactolipid. P700 is a divinyl chlorophyll a/divinyl chlorophyll a' dimer, A0 is one or more divinyl chlorophyll a, A1 is one or both phylloquinones and FX is a shared 4Fe-4S iron-sulfur center. as cofactor.

It is found in the cellular thylakoid membrane. It catalyses the reaction reduced [plastocyanin] + hnu + oxidized [2Fe-2S]-[ferredoxin] = oxidized [plastocyanin] + reduced [2Fe-2S]-[ferredoxin]. PsaA and PsaB bind P700, the primary electron donor of photosystem I (PSI), as well as the electron acceptors A0, A1 and FX. PSI is a plastocyanin/cytochrome c6-ferredoxin oxidoreductase, converting photonic excitation into a charge separation, which transfers an electron from the donor P700 chlorophyll pair to the spectroscopically characterized acceptors A0, A1, FX, FA and FB in turn. Oxidized P700 is reduced on the lumenal side of the thylakoid membrane by plastocyanin or cytochrome c6. The chain is Photosystem I P700 chlorophyll a apoprotein A1 from Prochlorococcus marinus (strain MIT 9303).